A 219-amino-acid polypeptide reads, in one-letter code: Protein YNG1 (219 aa).

Residues 155-204 (EVYCFCRNVSYGPMVACDNPACPFEWFHYGCVGLKQAPKGKWYCSKDCKE) form a PHD-type; degenerate zinc finger. Residues Cys158, Cys160, Cys171, Cys176, His182, Cys185, Cys198, and Cys202 each coordinate Zn(2+).

This sequence belongs to the ING family. In terms of assembly, component of the NuA3 histone acetyltransferase (HAT) complex. The NuA3 HAT complex has 2 functionally distinct forms that participate in transcription. The NuA3a HAT complex is composed of at least NTO1, SAS3, TAF14, YNG1 and EAF6. The NuA3b HAT complex contains an additional subunit, PDP3. Interacts with H3K4me3 and to a lesser extent with H3K4me2.

It localises to the nucleus. Histone-binding component of the NuA3a histone acetyltransferase complex. Targets the NuA3a HAT complex via histone H3K4me3 to facilitate transcription initiation at promoter regions. SAS3 then acetylates H3K14, leading to transcription initiation at a subset of genes. YNG1 is required for the HAT activity of NuA3 but not for its integrity. Mediates the interaction of SAS3 with nucleosomes. This chain is Protein YNG1 (YNG1), found in Saccharomyces cerevisiae (strain ATCC 204508 / S288c) (Baker's yeast).